We begin with the raw amino-acid sequence, 434 residues long: Putative nuclease OPG089 (434 aa).

6 residues coordinate Mg(2+): Asp-33, Asp-74, Glu-168, Asp-170, Asp-196, and Asp-198.

Belongs to the XPG/RAD2 endonuclease family. FEN1 subfamily. Mg(2+) is required as a cofactor.

The protein localises to the virion. In terms of biological role, putative nuclease that seems to be required for double-strand break repair, homologous recombination, and production of full-length viral genomic DNA. The protein is Putative nuclease OPG089 (OPG089) of Vaccinia virus (strain Western Reserve) (VACV).